Reading from the N-terminus, the 223-residue chain is Deoxyribose-phosphate aldolase (223 aa).

Residue Asp-89 is the Proton donor/acceptor of the active site. Catalysis depends on Lys-152, which acts as the Schiff-base intermediate with acetaldehyde. Catalysis depends on Lys-181, which acts as the Proton donor/acceptor.

It belongs to the DeoC/FbaB aldolase family. DeoC type 1 subfamily.

It localises to the cytoplasm. The enzyme catalyses 2-deoxy-D-ribose 5-phosphate = D-glyceraldehyde 3-phosphate + acetaldehyde. Its pathway is carbohydrate degradation; 2-deoxy-D-ribose 1-phosphate degradation; D-glyceraldehyde 3-phosphate and acetaldehyde from 2-deoxy-alpha-D-ribose 1-phosphate: step 2/2. Functionally, catalyzes a reversible aldol reaction between acetaldehyde and D-glyceraldehyde 3-phosphate to generate 2-deoxy-D-ribose 5-phosphate. The chain is Deoxyribose-phosphate aldolase from Bacillus cereus (strain ATCC 10987 / NRS 248).